Here is a 167-residue protein sequence, read N- to C-terminus: Protein tyrosine phosphatase type IVA 2 (167 aa).

The region spanning 5–158 (APVEISYENM…YRPKMRLRFR (154 aa)) is the Tyrosine-protein phosphatase domain. The cysteines at positions 46 and 101 are disulfide-linked. Aspartate 69 functions as the Proton donor in the catalytic mechanism. The active-site Phosphocysteine intermediate is cysteine 101. 102-107 (VAGLGR) contacts phosphate. Arginine 107 is a substrate binding site. The residue at position 164 (cysteine 164) is a Cysteine methyl ester. Cysteine 164 carries S-farnesyl cysteine lipidation. The propeptide at 165–167 (CVQ) is removed in mature form.

The protein belongs to the protein-tyrosine phosphatase family. As to quaternary structure, in contrast to PTP4A1 and PTP4A3, does not interact with tubulin. Interacts with RABGGTB. Post-translationally, farnesylated. Farnesylation is required for membrane targeting and for interaction with RABGGTB. In terms of tissue distribution, expressed in skeletal muscle, and at lower levels in liver, lung, heart, kidney, brain, testis and spleen.

Its subcellular location is the cell membrane. The protein resides in the early endosome. It localises to the cytoplasm. It catalyses the reaction O-phospho-L-tyrosyl-[protein] + H2O = L-tyrosyl-[protein] + phosphate. With respect to regulation, inhibited by sodium orthovanadate and pentamidine. Its function is as follows. Protein tyrosine phosphatase which stimulates progression from G1 into S phase during mitosis. Inhibits geranylgeranyl transferase type II activity by blocking the association between RABGGTA and RABGGTB. The polypeptide is Protein tyrosine phosphatase type IVA 2 (Ptp4a2) (Mus musculus (Mouse)).